A 101-amino-acid chain; its full sequence is Secreted RxLR effector protein 64 (101 aa).

A signal peptide spans 1 to 23 (MMSPPMTTTLMFILNYAIISFHG). Positions 48–51 (RELR) match the RxLR motif. The chain crosses the membrane as a helical span at residues 67–87 (LQPILPLPLCLPFPLVPASIF).

It belongs to the RxLR effector family.

Its subcellular location is the secreted. The protein resides in the host cytoplasm. It localises to the host nucleus. It is found in the membrane. In terms of biological role, effector that acts as a broad suppressor of cell death to interrupt plant immunity. Inhibits cell death induced by cell death-inducing proteins, including the PAMP elicitor INF1 from P.infestans. The polypeptide is Secreted RxLR effector protein 64 (Plasmopara viticola (Downy mildew of grapevine)).